The primary structure comprises 108 residues: Synaptobrevin-1 (108 aa).

Residues 1 to 25 form a disordered region; it reads MDAQGDAGAQGGSQGPRPSNKRLQQ. Over 1-85 the chain is Cytoplasmic; the sequence is MDAQGDAGAQ…KRKYWWKNIK (85 aa). The region spanning 22–82 is the v-SNARE coiled-coil homology domain; sequence RLQQTQAQVD…ATLKRKYWWK (61 aa). The chain crosses the membrane as a helical; Anchor for type IV membrane protein span at residues 86–106; sequence MMIIMCAIVVILIIIIVLWAG. The Extracellular segment spans residues 107 to 108; it reads GK.

The protein belongs to the synaptobrevin family. As to quaternary structure, part of the SNARE core complex containing CBG09569/SNAP25, snb-1/VAMP2 and CBG03570/STX1A. This complex binds to cpx-1/CPLX1.

It is found in the cytoplasmic vesicle. Its subcellular location is the secretory vesicle. It localises to the synaptic vesicle membrane. The protein localises to the cell membrane. The protein resides in the synapse. It is found in the synaptosome. Involved in the targeting and/or fusion of transport vesicles to their target membrane. Acts in neuronal exocytosis of synaptic transmission. Likely to have a role in cholinergic transmisson. Required for viability, coordinated movement and M3 pharynx motor neuron function. The polypeptide is Synaptobrevin-1 (Caenorhabditis briggsae).